Here is a 255-residue protein sequence, read N- to C-terminus: Thiazole synthase (255 aa).

The active-site Schiff-base intermediate with DXP is lysine 96. 1-deoxy-D-xylulose 5-phosphate contacts are provided by residues glycine 157, 183–184, and 205–206; these read AG and NT.

Belongs to the ThiG family. As to quaternary structure, homotetramer. Forms heterodimers with either ThiH or ThiS.

The protein localises to the cytoplasm. It carries out the reaction [ThiS sulfur-carrier protein]-C-terminal-Gly-aminoethanethioate + 2-iminoacetate + 1-deoxy-D-xylulose 5-phosphate = [ThiS sulfur-carrier protein]-C-terminal Gly-Gly + 2-[(2R,5Z)-2-carboxy-4-methylthiazol-5(2H)-ylidene]ethyl phosphate + 2 H2O + H(+). It functions in the pathway cofactor biosynthesis; thiamine diphosphate biosynthesis. In terms of biological role, catalyzes the rearrangement of 1-deoxy-D-xylulose 5-phosphate (DXP) to produce the thiazole phosphate moiety of thiamine. Sulfur is provided by the thiocarboxylate moiety of the carrier protein ThiS. In vitro, sulfur can be provided by H(2)S. The chain is Thiazole synthase from Anoxybacillus flavithermus (strain DSM 21510 / WK1).